We begin with the raw amino-acid sequence, 208 residues long: MIGLVGRKVGMTRVFTEDGVSIPVTVIEIEANRVTQVKTLENDGYTAVQVTTGSKKASRVTKPEAGHFVKAGVEAGRGLWEFRTEGEEFTLGQEINVDIFADVKKVDVTGTSKGKGFQGGVKRWNFRTQDATHGNSLSHRVLGSIGQNQTPGRVFKGKKMAGHLGAERVTVQSLEVVRVDAERKLLLVKGAVPGATNSDVIVKPAVKA.

At Gln149 the chain carries N5-methylglutamine.

It belongs to the universal ribosomal protein uL3 family. As to quaternary structure, part of the 50S ribosomal subunit. Forms a cluster with proteins L14 and L19. Post-translationally, methylated by PrmB.

One of the primary rRNA binding proteins, it binds directly near the 3'-end of the 23S rRNA, where it nucleates assembly of the 50S subunit. The protein is Large ribosomal subunit protein uL3 of Actinobacillus succinogenes (strain ATCC 55618 / DSM 22257 / CCUG 43843 / 130Z).